We begin with the raw amino-acid sequence, 165 residues long: MSHPALTQLRALRYFKEIPALEPQLLDWLLLEDSMTKRFEQQGKTVSVTMIREGFVEQNEIPEELPLLPKESRYWLREILLCADGEPWLAGRTVVPVSTLSGPELALQKLGKTPLGRYLFTSSTLTRDFIEIGRDAGLWGRRSRLRLSGKPLLLTELFLPASPLY.

The substrate site is built by Met35, Arg77, Leu115, and Glu156.

This sequence belongs to the UbiC family. As to quaternary structure, monomer.

It localises to the cytoplasm. It carries out the reaction chorismate = 4-hydroxybenzoate + pyruvate. The protein operates within cofactor biosynthesis; ubiquinone biosynthesis. Removes the pyruvyl group from chorismate, with concomitant aromatization of the ring, to provide 4-hydroxybenzoate (4HB) for the ubiquinone pathway. The sequence is that of Chorismate pyruvate-lyase from Shigella dysenteriae serotype 1 (strain Sd197).